The following is a 578-amino-acid chain: MEVKGEIYRVAGPVVTAIGLDAKMYDLCKVGNEGLMGEVIQIVGGKTIIQVYEETGGVKPGEPCVTTGMSLAVELGPGLLSSIYDGVQRPLHVLLEKTGGFIQRGVTADGLDHEKLWEFKPVAKKGDFVKGGEVLGVVQETVNLEHKVMMPPDKSGTVADIKSGNFTVLETVCTLTDGTELQMMHRWPVRRPRPVKRKLTPEKPLVTGQRILDGLFPVAKGGTAAIPGPFGSGKTVTQQQLSKWSDTEIVVYVGCGERGNEMADVLWDFPELEDPQTGRPLMERTILVANTSNMPVAAREASVYTGMTLAEYFRDMGYNVSLMADSTSRWAEAMREISSRLEEMPGEEGYPAYLSARLAEFYERAGVAETLCGEKGSITAIGAVSPPGGDFSEPVTQNTLRIVKVFWALDAKLSQRRHFPAINWLNSYSLYKEDLNDWFTENVAPDYVAMREKAMDMLQTESELQEIVQLVGSDALPEEQQLLLEITRMIREIYLQQNAFHPIDTYSPFAKQYKIMQAIMKYGDAAMDALKSGVPASEIIKMESKDELPKVKFEEDFDGSLSAVLAKMDKEFAALGGR.

228 to 235 (GPFGSGKT) contributes to the ATP binding site.

This sequence belongs to the ATPase alpha/beta chains family. Has multiple subunits with at least A(3), B(3), C, D, E, F, H, I and proteolipid K(x).

The protein resides in the cell membrane. It catalyses the reaction ATP + H2O + 4 H(+)(in) = ADP + phosphate + 5 H(+)(out). Functionally, component of the A-type ATP synthase that produces ATP from ADP in the presence of a proton gradient across the membrane. The A chain is the catalytic subunit. In Methanosarcina acetivorans (strain ATCC 35395 / DSM 2834 / JCM 12185 / C2A), this protein is A-type ATP synthase subunit A.